The primary structure comprises 253 residues: Probable transcriptional regulatory protein Tlet_1011 (253 aa).

This sequence belongs to the TACO1 family.

It localises to the cytoplasm. In Pseudothermotoga lettingae (strain ATCC BAA-301 / DSM 14385 / NBRC 107922 / TMO) (Thermotoga lettingae), this protein is Probable transcriptional regulatory protein Tlet_1011.